Reading from the N-terminus, the 2346-residue chain is MSNGYRTLSQHLNDLKKENFSLKLRIYFLEERMQQKYEASREDIYKRNIELKVEVESLKRELQDKKQHLDKTWADVENLNSQNEAELRRQFEERQQETEHVYELLENKIQLLQEESRLAKNEAARMAALVEAEKECNLELSEKLKGVTKNWEDVPGDQVKPDQYTEALAQRDKRIEELNQSLAAQERLVEQLSREKQQLLHLLEEPTSMEVQPMTEELLKQQKLNSHETTITQQSVSDSHLAELQEKIQQTEATNKILQEKLNEMSYELKCAQESSQKQDGTIQNLKETLKSRERETEELYQVIEGQNDTMAKLREMLHQSQLGQLHSSEGTSPAQQQVALLDLQSALFCSQLEIQKLQRVVRQKERQLADAKQCVQFVEAAAHESEQQKEASWKHNQELRKALQQLQEELQNKSQQLRAWEAEKYNEIRTQEQNIQHLNHSLSHKEQLLQEFRELLQYRDNSDKTLEANEMLLEKLRQRIHDKAVALERAIDEKFSALEEKEKELRQLRLAVRERDHDLERLRDVLSSNEATMQSMESLLRAKGLEVEQLSTTCQNLQWLKEEMETKFSRWQKEQESIIQQLQTSLHDRNKEVEDLSATLLCKLGPGQSEIAEELCQRLQRKERMLQDLLSDRNKQVLEHEMEIQGLLQSVSTREQESQAAAEKLVQALMERNSELQALRQYLGGRDSLMSQAPISNQQAEVTPTGRLGKQTDQGSMQIPSRDDSTSLTAKEDVSIPRSTLGDLDTVAGLEKELSNAKEELELMAKKERESQMELSALQSMMAVQEEELQVQAADMESLTRNIQIKEDLIKDLQMQLVDPEDIPAMERLTQEVLLLREKVASVESQGQEISGNRRQQLLLMLEGLVDERSRLNEALQAERQLYSSLVKFHAHPESSERDRTLQVELEGAQVLRSRLEEVLGRSLERLNRLETLAAIGGAAAGDDTEDTSTEFTDSIEEEAAHHSHQQLVKVALEKSLATVETQNPSFSPPSPMGGDSNRCLQEEMLHLRAEFHQHLEEKRKAEEELKELKAQIEEAGFSSVSHIRNTMLSLCLENAELKEQMGEAMSDGWEIEEDKEKGEVMVETVVTKEGLSESSLQAEFRKLQGKLKNAHNIINLLKEQLVLSSKEGNSKLTPELLVHLTSTIERINTELVGSPGKHQHQEEGNVTVRPFPRPQSLDLGATFTVDAHQLDNQSQPRDPGPQSAFSLPGSTQHLRSQLSQCKQRYQDLQEKLLLSEATVFAQANELEKYRVMLTGESLVKQDSKQIQVDLQDLGYETCGRSENEAEREETTSPECEEHNSLKEMVLMEGLCSEQGRRGSTLASSSERKPLENQLGKQEEFRVYGKSENILVLRKDIKDLKAQLQNANKVIQNLKSRVRSLSVTSDYSSSLERPRKLRAVGTLEGSSPHSVPDEDEGWLSDGTGAFYSPGLQAKKDLESLIQRVSQLEAQLPKNGLEEKLAEELRSASWPGKYDSLIQDQARELSYLRQKIREGRGICYLITRHAKDTVKSFEDLLRSNDIDYYLGQSFREQLAQGSQLTERLTSKLSTKDHKSEKDQAGLEPLALRLSRELQEKEKVIEVLQAKLDARSLTPSSSHALSDSHRSPSSTSFLSDELEACSDMDIVSEYTHYEEKKASPSHSDSIHHSSHSAVLSSKPSSTSASQGAKAESNSNPISLPTPQNTPKEANQAHSGFHFHSIPKLASLPQAPLPSAPSSFLPFSPTGPLLLGCCETPVVSLAEAQQELQMLQKQLGESASTVPPASTATLLSNDLEADSSYYLNSAQPHSPPRGTIELGRILEPGYLGSSGKWDVMRPQKGSVSGDLSSGSSVYQLNSKPTGADLLEEHLGEIRNLRQRLEESICINDRLREQLEHRLTSTARGRGSTSNFYSQGLESIPQLCNENRVLREDNRRLQAQLSHVSREHSQETESLREALLSSRSHLQELEKELEHQKVERQQLLEDLREKQQEVLHFREERLSLQENDSRLQHKLVLLQQQCEEKQQLFESLQSELQIYEALYGNSKKGLKAYSLDACHQIPLSSDLSHLVAEVRALRGQLEQSIQGNNCLRLQLQQQLESGAGKASLSPSSINQNFPASTDPGNKQLLLQDSAVSPPVRDVGMNSPALVFPSSASSTPGSETPIINRANGLGLDTSPVMKTPPKLEGDATDGSFANKHGRHVIGHIDDYSALRQQIAEGKLLVKKIVSLVRSACSFPGLEAQGTEVLGSKGIHELRSSTSALHHALEESASLLTMFWRAALPSTHIPVLPGKVGESTERELLELRTKVSKQERLLQSTTEHLKNANQQKESMEQFIVSQLTRTHDVLKKARTNLEVKSLRALPCTPAL.

4 coiled-coil regions span residues 41-132 (REDI…LVEA), 162-205 (DQYT…LLEE), 238-318 (DSHL…REML), and 350-684 (CSQL…RQYL). Position 252 is a phosphoserine (E252). Residues 698–732 (NQQAEVTPTGRLGKQTDQGSMQIPSRDDSTSLTAK) are disordered. T704 bears the Phosphothreonine mark. Positions 722–732 (SRDDSTSLTAK) are enriched in basic and acidic residues. 6 coiled-coil regions span residues 743–936 (GDLD…TLAA), 1002–1043 (LQEE…SSVS), 1096–1124 (SSLQAEFRKLQGKLKNAHNIINLLKEQLV), 1212–1240 (STQHLRSQLSQCKQRYQDLQEKLLLSEAT), 1346–1385 (GKSENILVLRKDIKDLKAQLQNANKVIQNLKSRVRSLSVT), and 1431–1455 (GLQAKKDLESLIQRVSQLEAQLPKN). The disordered stretch occupies residues 1193–1214 (DNQSQPRDPGPQSAFSLPGSTQ). Residues 1205–1214 (SAFSLPGSTQ) are compositionally biased toward polar residues. The Olduvai domain occupies 1551-1642 (KDHKSEKDQA…EEKKASPSHS (92 aa)). Residues 1591–1600 (SLTPSSSHAL) show a composition bias toward low complexity. Disordered stretches follow at residues 1591 to 1614 (SLTPSSSHALSDSHRSPSSTSFLS) and 1633 to 1690 (EEKK…EANQ). The span at 1652-1690 (AVLSSKPSSTSASQGAKAESNSNPISLPTPQNTPKEANQ) shows a compositional bias: polar residues. 2 coiled-coil regions span residues 1736 to 1760 (VVSLAEAQQELQMLQKQLGESASTV) and 1840 to 2077 (GADL…QQLE). Disordered stretches follow at residues 2081-2103 (GKASLSPSSINQNFPASTDPGNK) and 2127-2156 (VFPSSASSTPGSETPIINRANGLGLDTSPV). A compositionally biased stretch (polar residues) spans 2085 to 2103 (LSPSSINQNFPASTDPGNK). A coiled-coil region spans residues 2273–2312 (ESTERELLELRTKVSKQERLLQSTTEHLKNANQQKESMEQ).

Interacts with PDE4D. Isoform 13 interacts with MAPRE1 and MAPRE3. Isoform 13 forms a pericentrosomal complex with AKAP9, CDK5RAP2 and EB1/MAPRE1; within this complex, may mediate MAPRE1-binding to CDK5RAP2. Interaction of isoform 13 with AKAP9 stabilizes both proteins. Isoform 13 interacts (via N-terminus) with CAMSAP2; this interaction is much stronger in the presence of AKAP9. In complex with AKAP9, Isoform 13 recruits CAMSAP2 to the Golgi apparatus. Isoform 13 interacts with unglycosylated LGALS3BP; this interaction may connect the pericentrosomal complex to the gamma-tubulin ring complex (gamma-TuRC) to promote microtubule assembly and acetylation. In terms of tissue distribution, highly expressed in adult and fetal heart, in skeletal muscle and, to a lower extent, in brain and placenta.

The protein localises to the golgi apparatus. It is found in the cytoplasm. The protein resides in the cytoskeleton. It localises to the microtubule organizing center. Its subcellular location is the centrosome. In terms of biological role, functions as an anchor sequestering components of the cAMP-dependent pathway to Golgi and/or centrosomes. Functionally, participates in microtubule dynamics, promoting microtubule assembly. Depending upon the cell context, may act at the level of the Golgi apparatus or that of the centrosome. In complex with AKAP9, recruits CAMSAP2 to the Golgi apparatus and tethers non-centrosomal minus-end microtubules to the Golgi, an important step for polarized cell movement. In complex with AKAP9, EB1/MAPRE1 and CDK5RAP2, contributes to microtubules nucleation and extension from the centrosome to the cell periphery, a crucial process for directed cell migration, mitotic spindle orientation and cell-cycle progression. The protein is Myomegalin (PDE4DIP) of Homo sapiens (Human).